The sequence spans 118 residues: Basic phospholipase A2 PA-5 (118 aa).

Cystine bridges form between Cys-11–Cys-71, Cys-27–Cys-117, Cys-29–Cys-45, Cys-44–Cys-98, Cys-51–Cys-91, Cys-60–Cys-84, and Cys-78–Cys-89. Ca(2+)-binding residues include Tyr-28, Gly-30, and Gly-32. Residue His-48 is part of the active site. Asp-49 contributes to the Ca(2+) binding site. Asp-92 is an active-site residue.

Belongs to the phospholipase A2 family. Group I subfamily. D49 sub-subfamily. The cofactor is Ca(2+). In terms of tissue distribution, expressed by the venom gland.

Its subcellular location is the secreted. It carries out the reaction a 1,2-diacyl-sn-glycero-3-phosphocholine + H2O = a 1-acyl-sn-glycero-3-phosphocholine + a fatty acid + H(+). Its function is as follows. PLA2 catalyzes the calcium-dependent hydrolysis of the 2-acyl groups in 3-sn-phosphoglycerides. This chain is Basic phospholipase A2 PA-5, found in Pseudechis australis (Mulga snake).